A 123-amino-acid chain; its full sequence is Ribonuclease P protein component 2 (123 aa).

This sequence belongs to the eukaryotic/archaeal RNase P protein component 2 family. Consists of a catalytic RNA component and at least 4-5 protein subunits.

It is found in the cytoplasm. The enzyme catalyses Endonucleolytic cleavage of RNA, removing 5'-extranucleotides from tRNA precursor.. Its function is as follows. Part of ribonuclease P, a protein complex that generates mature tRNA molecules by cleaving their 5'-ends. The chain is Ribonuclease P protein component 2 from Sulfurisphaera tokodaii (strain DSM 16993 / JCM 10545 / NBRC 100140 / 7) (Sulfolobus tokodaii).